The primary structure comprises 685 residues: MWLLLRRAYPLRILLPLRGEWVGRRGLPRSLAPGPPRRRYRKEALPALEMPVSPVTTTEIRQYLRAHGIPFQDGHSCLRAPSPFVVSSDIKNEKKDAPTSFCLFIDKTTGHFLCMTSLAEGSWEDLQASVEGRGDGAKEGVLLREGPEAEVREEVLRIWNRAIPLWELPDPEEAQLARVMFGLTKVTDDTLRRFSVRYLRSARSLVFPWFTPGSSGLRGLKLLGAEGQENGVQYVETTIPRPGVYHNLFGLPLISRRDTEVVVTSRELDSLALSQSTGLPTLSLPRGTVCLPPALLPYLEQFRRIVFWLGDDLRSWEAAKLFARKLNPKRCSLVRPGNQQPRPLEALNQGLSLPRILRTALPAWHKSIVSFRQLREEVLGELSNVEQAAGVRWSRFPDLNRLLKGHRKGELTVFTGPTGSGKTTFISEYALDLCTQGVNTLWGSFEISNVRLARVMLTQFAVTRLEEQLDKYEEWADRFEDLPLYFMTFHGQQSIRSVIDTMQHAVYVYDVCHVVIDNLQFMMGHEQLSSDRIAAQDYIVGAFRKFATDNSCHVTLVIHPRKEDDDKELQTASIFGSAKASQEADNVLILQDRKLVTGPGKRYLQVSKNRFDGDVGVFPLEFNKNSLTFSIPPKSKARLKKIKDDNGLVAKKSSSGKKGAAHQNPEICLGQDPSPAQPDTSKSSG.

Residues 1–31 constitute a mitochondrion transit peptide; sequence MWLLLRRAYPLRILLPLRGEWVGRRGLPRSL. Residues 1 to 122 are contributes to single strand DNA binding activity; that stretch reads MWLLLRRAYP…LCMTSLAEGS (122 aa). Residues 54–214 are N-terminal region (NTR); sequence PVTTTEIRQY…LVFPWFTPGS (161 aa). The segment at 122–373 is required for hexamers formation and DNA helicase activity; that stretch reads SWEDLQASVE…WHKSIVSFRQ (252 aa). Positions 215 to 335 are primase-like domain; that stretch reads SGLRGLKLLG…LNPKRCSLVR (121 aa). The region spanning 385 to 636 is the SF4 helicase domain; it reads VEQAAGVRWS…LTFSIPPKSK (252 aa). The maybe required for stable oligomeric structure stretch occupies residues 406 to 591; that stretch reads HRKGELTVFT…QEADNVLILQ (186 aa). Residue 416 to 423 coordinates ATP; the sequence is GPTGSGKT. Residues 454-482 adopt a coiled-coil conformation; the sequence is RVMLTQFAVTRLEEQLDKYEEWADRFEDL. Residues 641–685 form a might negatively regulate ATPase activity region; it reads KIKDDNGLVAKKSSSGKKGAAHQNPEICLGQDPSPAQPDTSKSSG. The segment at 642 to 685 is disordered; that stretch reads IKDDNGLVAKKSSSGKKGAAHQNPEICLGQDPSPAQPDTSKSSG.

As to quaternary structure, homohexamer (via C-terminus), which assembles in a ring-like structure. Homoheptamer, which assembles in a ring-like structure. Homooctamer, which assembles in a ring-like structure. Oligomers may sequentially eject two monomers (octamer&gt;heptamer&gt;hexamer) upon DNA binding. Oligomerization is Mg(2+), nucleotide and DNA-independent, however, Mg(2+) and nucleotide stabilize the homohexameric form. Interacts with POLG in vitro. Interacts with LONP1. As to expression, ubiquitous with the highest levels in the liver, heart and kidneys. The skeletal muscle, brain and testis showed lower but detectable expression. Expression is coregulated with MRPL43.

It is found in the mitochondrion matrix. It localises to the mitochondrion nucleoid. The protein localises to the mitochondrion inner membrane. It carries out the reaction ATP + H2O = ADP + phosphate + H(+). It catalyses the reaction Couples ATP hydrolysis with the unwinding of duplex DNA at the replication fork by translocating in the 5'-3' direction. This creates two antiparallel DNA single strands (ssDNA). The leading ssDNA polymer is the template for DNA polymerase III holoenzyme which synthesizes a continuous strand.. In terms of biological role, mitochondrial helicase involved in mtDNA replication and repair. Might have a role in mtDNA repair. Has DNA strand separation activity needed to form a processive replication fork for leading strand synthesis which is catalyzed by the formation of a replisome complex with POLG and mtSDB. Preferentially unwinds DNA substrates with pre-existing 5'-and 3'- single-stranded tails but is also active on a 5'- flap substrate. Can dissociate the invading strand of immobile or mobile D-loop DNA structures irrespective of the single strand polarity of the third strand. In addition to its DNA strand separation activity, also has DNA strand annealing, DNA strand-exchange and DNA branch migration activities. This Mus musculus (Mouse) protein is Twinkle mtDNA helicase.